The primary structure comprises 147 residues: Ribonuclease H (147 aa).

Residues aspartate 8, glutamate 46, aspartate 68, and aspartate 132 each contribute to the Mg(2+) site.

The protein belongs to the RNase H family. Monomer. Mg(2+) serves as cofactor.

It is found in the cytoplasm. It carries out the reaction Endonucleolytic cleavage to 5'-phosphomonoester.. In terms of biological role, endonuclease that specifically degrades the RNA of RNA-DNA hybrids. This chain is Ribonuclease H, found in Geotalea uraniireducens (strain Rf4) (Geobacter uraniireducens).